Reading from the N-terminus, the 177-residue chain is Putative peroxiredoxin (177 aa).

One can recognise a Thioredoxin domain in the interval 8-177 (TAKGNEIPDT…ASIDTILTKV (170 aa)). The active-site Cysteine sulfenic acid (-SOH) intermediate is Cys64. A Microbody targeting signal motif is present at residues 175-177 (TKV).

Belongs to the peroxiredoxin family. Prx5 subfamily. Homodimer; disulfide-linked, upon oxidation.

The enzyme catalyses a hydroperoxide + [thioredoxin]-dithiol = an alcohol + [thioredoxin]-disulfide + H2O. Functionally, thiol-specific peroxidase that catalyzes the reduction of hydrogen peroxide and organic hydroperoxides to water and alcohols, respectively. Plays a role in cell protection against oxidative stress by detoxifying peroxides and as sensor of hydrogen peroxide-mediated signaling events. The sequence is that of Putative peroxiredoxin from Malassezia furfur (Pityriasis versicolor infection agent).